We begin with the raw amino-acid sequence, 124 residues long: Fluoride-specific ion channel FluC (124 aa).

4 consecutive transmembrane segments (helical) span residues 1 to 21, 37 to 57, 69 to 89, and 99 to 119; these read MIALIAAVSAGGIAGTLLRFA, GTLAVNLVGCLLIGLLYGLFL, GLIVGFLGGLTTFSSFSLDTV, and LALGYTSISVVGGLLATWAGL. Residues glycine 76 and threonine 79 each contribute to the Na(+) site.

It belongs to the fluoride channel Fluc/FEX (TC 1.A.43) family.

Its subcellular location is the cell inner membrane. The catalysed reaction is fluoride(in) = fluoride(out). Its activity is regulated as follows. Na(+) is not transported, but it plays an essential structural role and its presence is essential for fluoride channel function. Fluoride-specific ion channel. Important for reducing fluoride concentration in the cell, thus reducing its toxicity. This Pseudomonas putida (strain ATCC 700007 / DSM 6899 / JCM 31910 / BCRC 17059 / LMG 24140 / F1) protein is Fluoride-specific ion channel FluC.